A 151-amino-acid polypeptide reads, in one-letter code: Deoxyuridine 5'-triphosphate nucleotidohydrolase (151 aa).

Residues 70–72 (RSG), Asn83, 87–89 (LID), and Met97 each bind substrate.

The protein belongs to the dUTPase family. As to quaternary structure, homotrimer. Requires Mg(2+) as cofactor.

It carries out the reaction dUTP + H2O = dUMP + diphosphate + H(+). Its pathway is pyrimidine metabolism; dUMP biosynthesis; dUMP from dCTP (dUTP route): step 2/2. In terms of biological role, this enzyme is involved in nucleotide metabolism: it produces dUMP, the immediate precursor of thymidine nucleotides and it decreases the intracellular concentration of dUTP so that uracil cannot be incorporated into DNA. This is Deoxyuridine 5'-triphosphate nucleotidohydrolase from Escherichia coli (strain K12 / MC4100 / BW2952).